Reading from the N-terminus, the 199-residue chain is MIAVIDVSGNNLTSLTNALIRLGGHFALTHDAEEIQKASHVILPGVGTARSGMTALQQNGLIDVLRTLTQPLLGICLGMQLLLEYSEEDDIPCLGLIPGVAELLKAERNHPVPHMGWNNLHWQKTSSLQQGLNNSDYVYFVHSYALKADDYALARCQYHEEFTAVVKKGNFYGMQFHPEKSADVGMVLLNNFLSLESTC.

In terms of domain architecture, Glutamine amidotransferase type-1 spans 1–199; that stretch reads MIAVIDVSGN…NNFLSLESTC (199 aa). Catalysis depends on C76, which acts as the Nucleophile. Catalysis depends on residues H177 and E179.

In terms of assembly, heterodimer of HisH and HisF.

The protein localises to the cytoplasm. It catalyses the reaction 5-[(5-phospho-1-deoxy-D-ribulos-1-ylimino)methylamino]-1-(5-phospho-beta-D-ribosyl)imidazole-4-carboxamide + L-glutamine = D-erythro-1-(imidazol-4-yl)glycerol 3-phosphate + 5-amino-1-(5-phospho-beta-D-ribosyl)imidazole-4-carboxamide + L-glutamate + H(+). The catalysed reaction is L-glutamine + H2O = L-glutamate + NH4(+). Its pathway is amino-acid biosynthesis; L-histidine biosynthesis; L-histidine from 5-phospho-alpha-D-ribose 1-diphosphate: step 5/9. In terms of biological role, IGPS catalyzes the conversion of PRFAR and glutamine to IGP, AICAR and glutamate. The HisH subunit provides the glutamine amidotransferase activity that produces the ammonia necessary to HisF for the synthesis of IGP and AICAR. The chain is Imidazole glycerol phosphate synthase subunit HisH 2 from Legionella pneumophila (strain Paris).